The chain runs to 216 residues: Protein Syd (216 aa).

The protein belongs to the Syd family.

It is found in the cell inner membrane. Functionally, interacts with the SecY protein in vivo. May bind preferentially to an uncomplexed state of SecY, thus functioning either as a chelating agent for excess SecY in the cell or as a regulatory factor that negatively controls the translocase function. In Shewanella sp. (strain MR-4), this protein is Protein Syd.